The chain runs to 84 residues: U21-theraphotoxin-Cg1b (84 aa).

An N-terminal signal peptide occupies residues 1–21; sequence MKVSVLITLAVLGVMFLLTSA. Positions 22–47 are excised as a propeptide; sequence EERGSDQMDSPAWLKSMERIFQSEER. Disulfide bonds link cysteine 49/cysteine 63, cysteine 56/cysteine 68, and cysteine 62/cysteine 76. Phenylalanine 82 bears the Phenylalanine amide mark.

This sequence belongs to the neurotoxin 10 (Hwtx-1) family. 05 (F4a) subfamily. As to expression, expressed by the venom gland.

Its subcellular location is the secreted. Functionally, probable ion channel inhibitor. In Chilobrachys guangxiensis (Chinese earth tiger tarantula), this protein is U21-theraphotoxin-Cg1b.